We begin with the raw amino-acid sequence, 210 residues long: Phosphoribosyl-dephospho-CoA transferase (210 aa).

Catalysis depends on residues D135 and D137.

It belongs to the MdcG family.

The catalysed reaction is apo-[malonate decarboxylase ACP] + 2'-(5''-triphospho-alpha-D-ribosyl)-3'-dephospho-CoA = holo-[malonate decarboxylase ACP] + diphosphate. In terms of biological role, transfers 2'-(5-triphosphoribosyl)-3'-dephosphocoenzyme-A to the apo-[acyl-carrier-protein] of the malonate decarboxylase to yield holo-[acyl-carrier-protein]. The polypeptide is Phosphoribosyl-dephospho-CoA transferase (Pseudomonas aeruginosa (strain ATCC 15692 / DSM 22644 / CIP 104116 / JCM 14847 / LMG 12228 / 1C / PRS 101 / PAO1)).